We begin with the raw amino-acid sequence, 97 residues long: Large ribosomal subunit protein uL23 (97 aa).

The protein belongs to the universal ribosomal protein uL23 family. Part of the 50S ribosomal subunit. Contacts protein L29, and trigger factor when it is bound to the ribosome.

In terms of biological role, one of the early assembly proteins it binds 23S rRNA. One of the proteins that surrounds the polypeptide exit tunnel on the outside of the ribosome. Forms the main docking site for trigger factor binding to the ribosome. This Lactiplantibacillus plantarum (strain ATCC BAA-793 / NCIMB 8826 / WCFS1) (Lactobacillus plantarum) protein is Large ribosomal subunit protein uL23.